We begin with the raw amino-acid sequence, 180 residues long: Adenine phosphoribosyltransferase (180 aa).

The protein belongs to the purine/pyrimidine phosphoribosyltransferase family. As to quaternary structure, homodimer.

It is found in the cytoplasm. It catalyses the reaction AMP + diphosphate = 5-phospho-alpha-D-ribose 1-diphosphate + adenine. It participates in purine metabolism; AMP biosynthesis via salvage pathway; AMP from adenine: step 1/1. In terms of biological role, catalyzes a salvage reaction resulting in the formation of AMP, that is energically less costly than de novo synthesis. The sequence is that of Adenine phosphoribosyltransferase from Rhizobium johnstonii (strain DSM 114642 / LMG 32736 / 3841) (Rhizobium leguminosarum bv. viciae).